The sequence spans 315 residues: Putative methyltransferase SPBC8D2.16c (315 aa).

The protein belongs to the class IV-like SAM-binding methyltransferase superfamily.

Its subcellular location is the cytoplasm. The protein localises to the nucleus. The chain is Putative methyltransferase SPBC8D2.16c from Schizosaccharomyces pombe (strain 972 / ATCC 24843) (Fission yeast).